Here is a 49-residue protein sequence, read N- to C-terminus: Large ribosomal subunit protein bL33A (49 aa).

Residues 21–49 (KNKRNNPERVEMKKYCSRDNKHTLHRETK) are disordered. Residues 25–49 (NNPERVEMKKYCSRDNKHTLHRETK) are compositionally biased toward basic and acidic residues.

The protein belongs to the bacterial ribosomal protein bL33 family.

The protein is Large ribosomal subunit protein bL33A of Staphylococcus epidermidis (strain ATCC 35984 / DSM 28319 / BCRC 17069 / CCUG 31568 / BM 3577 / RP62A).